Here is a 257-residue protein sequence, read N- to C-terminus: Imidazole glycerol phosphate synthase subunit HisF (257 aa).

Catalysis depends on residues D11 and D130.

The protein belongs to the HisA/HisF family. As to quaternary structure, heterodimer of HisH and HisF.

Its subcellular location is the cytoplasm. The catalysed reaction is 5-[(5-phospho-1-deoxy-D-ribulos-1-ylimino)methylamino]-1-(5-phospho-beta-D-ribosyl)imidazole-4-carboxamide + L-glutamine = D-erythro-1-(imidazol-4-yl)glycerol 3-phosphate + 5-amino-1-(5-phospho-beta-D-ribosyl)imidazole-4-carboxamide + L-glutamate + H(+). It functions in the pathway amino-acid biosynthesis; L-histidine biosynthesis; L-histidine from 5-phospho-alpha-D-ribose 1-diphosphate: step 5/9. IGPS catalyzes the conversion of PRFAR and glutamine to IGP, AICAR and glutamate. The HisF subunit catalyzes the cyclization activity that produces IGP and AICAR from PRFAR using the ammonia provided by the HisH subunit. This is Imidazole glycerol phosphate synthase subunit HisF from Photobacterium profundum (strain SS9).